A 547-amino-acid chain; its full sequence is Chaperonin GroEL (547 aa).

ATP is bound by residues 30–33 (TLGP), K51, 87–91 (DGTTT), G415, 479–481 (NAA), and D495.

It belongs to the chaperonin (HSP60) family. In terms of assembly, forms a cylinder of 14 subunits composed of two heptameric rings stacked back-to-back. Interacts with the co-chaperonin GroES.

The protein localises to the cytoplasm. It catalyses the reaction ATP + H2O + a folded polypeptide = ADP + phosphate + an unfolded polypeptide.. Its function is as follows. Together with its co-chaperonin GroES, plays an essential role in assisting protein folding. The GroEL-GroES system forms a nano-cage that allows encapsulation of the non-native substrate proteins and provides a physical environment optimized to promote and accelerate protein folding. This chain is Chaperonin GroEL, found in Cupriavidus pinatubonensis (strain JMP 134 / LMG 1197) (Cupriavidus necator (strain JMP 134)).